The following is a 338-amino-acid chain: UPF0284 protein TV0153 (338 aa).

Belongs to the UPF0284 family.

The chain is UPF0284 protein TV0153 from Thermoplasma volcanium (strain ATCC 51530 / DSM 4299 / JCM 9571 / NBRC 15438 / GSS1).